The primary structure comprises 802 residues: LPS-assembly protein LptD (802 aa).

The first 25 residues, 1–25, serve as a signal peptide directing secretion; the sequence is MARLFSLKPLVLALGLCFGTHCAAA.

Belongs to the LptD family. As to quaternary structure, component of the lipopolysaccharide transport and assembly complex. Interacts with LptE and LptA.

It localises to the cell outer membrane. Functionally, together with LptE, is involved in the assembly of lipopolysaccharide (LPS) at the surface of the outer membrane. The chain is LPS-assembly protein LptD from Neisseria meningitidis serogroup B (strain ATCC BAA-335 / MC58).